Here is a 273-residue protein sequence, read N- to C-terminus: Putative pyruvate, phosphate dikinase regulatory protein (273 aa).

149-156 (GPSRTSKT) is a binding site for ADP.

It belongs to the pyruvate, phosphate/water dikinase regulatory protein family. PDRP subfamily.

It carries out the reaction N(tele)-phospho-L-histidyl/L-threonyl-[pyruvate, phosphate dikinase] + ADP = N(tele)-phospho-L-histidyl/O-phospho-L-threonyl-[pyruvate, phosphate dikinase] + AMP + H(+). It catalyses the reaction N(tele)-phospho-L-histidyl/O-phospho-L-threonyl-[pyruvate, phosphate dikinase] + phosphate + H(+) = N(tele)-phospho-L-histidyl/L-threonyl-[pyruvate, phosphate dikinase] + diphosphate. Functionally, bifunctional serine/threonine kinase and phosphorylase involved in the regulation of the pyruvate, phosphate dikinase (PPDK) by catalyzing its phosphorylation/dephosphorylation. The chain is Putative pyruvate, phosphate dikinase regulatory protein from Rickettsia africae (strain ESF-5).